Here is a 117-residue protein sequence, read N- to C-terminus: Large ribosomal subunit protein uL22 (117 aa).

It belongs to the universal ribosomal protein uL22 family. As to quaternary structure, part of the 50S ribosomal subunit.

This protein binds specifically to 23S rRNA; its binding is stimulated by other ribosomal proteins, e.g. L4, L17, and L20. It is important during the early stages of 50S assembly. It makes multiple contacts with different domains of the 23S rRNA in the assembled 50S subunit and ribosome. Functionally, the globular domain of the protein is located near the polypeptide exit tunnel on the outside of the subunit, while an extended beta-hairpin is found that lines the wall of the exit tunnel in the center of the 70S ribosome. The protein is Large ribosomal subunit protein uL22 of Latilactobacillus sakei subsp. sakei (strain 23K) (Lactobacillus sakei subsp. sakei).